The sequence spans 210 residues: Probable GTP-binding protein EngB (210 aa).

The 175-residue stretch at 27-201 (MGIEVAFAGR…HQKLDIWFSQ (175 aa)) folds into the EngB-type G domain. GTP contacts are provided by residues 35 to 42 (GRSNAGKS), 62 to 66 (GRTQL), 80 to 83 (DLPG), 147 to 150 (TKAD), and 180 to 182 (FSV). Mg(2+) is bound by residues Ser-42 and Thr-64.

The protein belongs to the TRAFAC class TrmE-Era-EngA-EngB-Septin-like GTPase superfamily. EngB GTPase family. Mg(2+) serves as cofactor.

Necessary for normal cell division and for the maintenance of normal septation. In Photorhabdus laumondii subsp. laumondii (strain DSM 15139 / CIP 105565 / TT01) (Photorhabdus luminescens subsp. laumondii), this protein is Probable GTP-binding protein EngB.